Consider the following 250-residue polypeptide: Kallikrein-14 (250 aa).

The N-terminal stretch at 1-18 (MFLLLIILQALAVAIAQS) is a signal peptide. The propeptide at 19–23 (QGDHK) is activation peptide. Positions 24–248 (IIGGYRCVRN…YHSWIQRTMQ (225 aa)) constitute a Peptidase S1 domain. The cysteines at positions 51 and 67 are disulfide-linked. Active-site charge relay system residues include H66 and D110. 3 cysteine pairs are disulfide-bonded: C142–C209, C174–C188, and C199–C224. S203 acts as the Charge relay system in catalysis.

The protein belongs to the peptidase S1 family. Kallikrein subfamily. Proteolytic cleavage of the activation peptide produces the active enzyme.

It is found in the secreted. The protein localises to the extracellular space. Its activity is regulated as follows. Inhibited by SERPINA1, SERPINC1, SERPINE1, SERPINF2, aprotinin, soybean, trypsin inhibitor and leupeptin. Inhibited by serine protease inhibitor SPINK5. Has an autoproteolytic activity which may have a regulatory effect. Activated by citrate and inhibited by zinc and to a lower extent by manganese. In terms of biological role, serine-type endopeptidase with a dual trypsin-like and chymotrypsin-like substrate specificity. May activate/inactivate the proteinase-activated receptors F2R, F2RL1 and F2RL3 and other kallikreins including KLK1, KLK3, KLK5 and KLK11. May function in seminal clot liquefaction through direct cleavage of the semenogelin SEMG1 and SEMG2 and activation of KLK3. May function through desmoglein DSG1 cleavage in epidermal desquamation a process by which the most superficial corneocytes are shed from the skin surface. May be involved in several aspects of tumor progression including growth, invasion and angiogenesis. The sequence is that of Kallikrein-14 (Klk14) from Mus musculus (Mouse).